A 314-amino-acid polypeptide reads, in one-letter code: Methionyl-tRNA formyltransferase (314 aa).

113-116 (SLLP) serves as a coordination point for (6S)-5,6,7,8-tetrahydrofolate.

Belongs to the Fmt family.

The enzyme catalyses L-methionyl-tRNA(fMet) + (6R)-10-formyltetrahydrofolate = N-formyl-L-methionyl-tRNA(fMet) + (6S)-5,6,7,8-tetrahydrofolate + H(+). In terms of biological role, attaches a formyl group to the free amino group of methionyl-tRNA(fMet). The formyl group appears to play a dual role in the initiator identity of N-formylmethionyl-tRNA by promoting its recognition by IF2 and preventing the misappropriation of this tRNA by the elongation apparatus. The protein is Methionyl-tRNA formyltransferase of Pseudomonas syringae pv. syringae (strain B728a).